A 590-amino-acid polypeptide reads, in one-letter code: Sulfoacetaldehyde acetyltransferase (590 aa).

This sequence belongs to the TPP enzyme family. Mg(2+) is required as a cofactor. Thiamine diphosphate serves as cofactor.

The protein resides in the cytoplasm. It catalyses the reaction acetyl phosphate + sulfite + H(+) = sulfoacetaldehyde + phosphate. Its pathway is organosulfur degradation; taurine degradation via aerobic pathway; acetyl phosphate and sulfite from taurine: step 2/2. The chain is Sulfoacetaldehyde acetyltransferase from Rhodobacter capsulatus (strain ATCC BAA-309 / NBRC 16581 / SB1003).